The primary structure comprises 616 residues: Chaperone protein HscA (616 aa).

It belongs to the heat shock protein 70 family.

Its function is as follows. Chaperone involved in the maturation of iron-sulfur cluster-containing proteins. Has a low intrinsic ATPase activity which is markedly stimulated by HscB. Involved in the maturation of IscU. In Shigella boydii serotype 18 (strain CDC 3083-94 / BS512), this protein is Chaperone protein HscA.